A 157-amino-acid chain; its full sequence is MADKGERAIKVVAENRKARFNYAIEDTVEAGIALTGTEVKSIRNGKTTIAESYADSKNGEIWLINSNIPEYLQANRFNHEPKRPRKLLLHRKQINKLMGAVDREGMTLIPLKLYFNERGRAKLLLAIAKGKKLHDKRESEKKRDWGREKGRLLRARG.

A disordered region spans residues 133–157 (LHDKRESEKKRDWGREKGRLLRARG). The segment covering 135–151 (DKRESEKKRDWGREKGR) has biased composition (basic and acidic residues).

It belongs to the SmpB family.

It localises to the cytoplasm. Its function is as follows. Required for rescue of stalled ribosomes mediated by trans-translation. Binds to transfer-messenger RNA (tmRNA), required for stable association of tmRNA with ribosomes. tmRNA and SmpB together mimic tRNA shape, replacing the anticodon stem-loop with SmpB. tmRNA is encoded by the ssrA gene; the 2 termini fold to resemble tRNA(Ala) and it encodes a 'tag peptide', a short internal open reading frame. During trans-translation Ala-aminoacylated tmRNA acts like a tRNA, entering the A-site of stalled ribosomes, displacing the stalled mRNA. The ribosome then switches to translate the ORF on the tmRNA; the nascent peptide is terminated with the 'tag peptide' encoded by the tmRNA and targeted for degradation. The ribosome is freed to recommence translation, which seems to be the essential function of trans-translation. This Nitrobacter winogradskyi (strain ATCC 25391 / DSM 10237 / CIP 104748 / NCIMB 11846 / Nb-255) protein is SsrA-binding protein.